The chain runs to 856 residues: Leucine--tRNA ligase (856 aa).

Positions 53-63 (PYPSGNLHMGH) match the 'HIGH' region motif. Residues 622–626 (KMSKS) carry the 'KMSKS' region motif. Position 625 (Lys-625) interacts with ATP.

This sequence belongs to the class-I aminoacyl-tRNA synthetase family.

The protein localises to the cytoplasm. The catalysed reaction is tRNA(Leu) + L-leucine + ATP = L-leucyl-tRNA(Leu) + AMP + diphosphate. This is Leucine--tRNA ligase from Prochlorococcus marinus (strain MIT 9215).